The following is a 299-amino-acid chain: Tyrosine recombinase XerC (299 aa).

One can recognise a Core-binding (CB) domain in the interval M1–N85. The Tyr recombinase domain maps to R106–D285. Active-site residues include R146, K170, H237, R240, and H263. The active-site O-(3'-phospho-DNA)-tyrosine intermediate is the Y272.

Belongs to the 'phage' integrase family. XerC subfamily. Forms a cyclic heterotetrameric complex composed of two molecules of XerC and two molecules of XerD.

It localises to the cytoplasm. Its function is as follows. Site-specific tyrosine recombinase, which acts by catalyzing the cutting and rejoining of the recombining DNA molecules. The XerC-XerD complex is essential to convert dimers of the bacterial chromosome into monomers to permit their segregation at cell division. It also contributes to the segregational stability of plasmids. This chain is Tyrosine recombinase XerC, found in Pseudomonas savastanoi pv. phaseolicola (strain 1448A / Race 6) (Pseudomonas syringae pv. phaseolicola (strain 1448A / Race 6)).